The following is an 84-amino-acid chain: Beta-toxin Ct16 (84 aa).

The first 19 residues, 1 to 19 (MNYFILLFVATFLLLDVNC), serve as a signal peptide directing secretion. The LCN-type CS-alpha/beta domain occupies 21–80 (KDGYPVDANNCKFECWKNEYCDELCKAKRAESGYCYKLKLSCWCEGLPDDEPTKTSDRCY). Intrachain disulfides connect C31–C79, C35–C55, C41–C62, and C45–C64. T82 carries the threonine amide modification.

It belongs to the long (4 C-C) scorpion toxin superfamily. Sodium channel inhibitor family. Alpha subfamily. As to expression, expressed by the venom gland.

The protein localises to the secreted. In terms of biological role, alpha toxins bind voltage-independently at site-3 of sodium channels (Nav) and inhibit the inactivation of the activated channels, thereby blocking neuronal transmission. Is possibly toxic to mice. This Centruroides tecomanus (Scorpion) protein is Beta-toxin Ct16.